A 333-amino-acid polypeptide reads, in one-letter code: cGAMP-activated phospholipase (333 aa).

One can recognise a PNPLA domain in the interval 10 to 191 (LALSGGGYRG…VGNAPGLFGL (182 aa)). Positions 14-19 (GGGYRG) match the GXGXXG motif. A GXSXG motif is present at residues 46–50 (GTSAG). Residue serine 48 is the Nucleophile of the active site. Residue aspartate 178 is the Proton acceptor of the active site. The DGA/G motif lies at 178–180 (DGG).

It belongs to the patatin family.

The enzyme catalyses a 1,2-diacyl-sn-glycero-3-phosphocholine + H2O = a 2-acyl-sn-glycero-3-phosphocholine + a fatty acid + H(+). It catalyses the reaction 1,2-di-(9Z-octadecenoyl)-sn-glycero-3-phosphoethanolamine + 2 H2O = sn-glycero-3-phosphoethanolamine + 2 (9Z)-octadecenoate + 2 H(+). Phospholipase activity is specifically activated upon cGAMP binding, which is produced by the cognate cyclic nucleotide synthase encoded in the same operon. Is not activated by cyclic dinucleotides 2',3'-cGAMP, c-diAMP or 3',3'-c-diGMP. Effector phospholipase of a CBASS antiviral system. CBASS (cyclic oligonucleotide-based antiphage signaling system) provides immunity against bacteriophages. The CD-NTase protein (CdnA) synthesizes cyclic nucleotides in response to infection; these serve as specific second messenger signals. The signals activate a diverse range of effectors, leading to bacterial cell death and thus abortive phage infection. A type II-A(GA) CBASS system. Functionally, phospholipase that is activated upon binding to the cyclic dinucleotide (CDN) second messenger 3',3'-cyclic GMP-AMP (cGAMP). Degrades phospholipids in the cell membrane. Its function is as follows. The capV-cdnA-cap2-cap3 operon provides about 10(4)-fold protection in strain BWHPSA011 against infection by phage PaMx41. In P.aeruginosa strain PAO1 it confers protection against phages PaMx41 and JBD18 but not JBD67 (JBD18 and JBD67 do not replicate in BWHPSA011 / Pa011). When acb2 in JBD67 is deleted this CBASS operon then protects against JDB67 also. This CBASS system limits prophage induction of lysogenized JBD67 as well as viral lytic replication. This is cGAMP-activated phospholipase from Pseudomonas aeruginosa (strain BWHPSA011 / Pa011).